The following is a 212-amino-acid chain: MLNVIATGLSLKARGKRRRQRWVDDGRVLALGESRRSSAISVADVVASLTRDVADFPVPGVEFKDLTPLFADRRGLAAVTEALADRASGADLVAGVDARGFLVAAAVATRLEVGVLAVRKGGKLPRPVLSEEYYRAYGAATLEILAEGIEVAGRRVVIIDDVLATGGTIGATRRLLERGGANVAGAAVVVELAGLSGRAALAPLPVHSLSRL.

This sequence belongs to the purine/pyrimidine phosphoribosyltransferase family. Homodimer.

The protein resides in the cytoplasm. It catalyses the reaction AMP + diphosphate = 5-phospho-alpha-D-ribose 1-diphosphate + adenine. It functions in the pathway purine metabolism; AMP biosynthesis via salvage pathway; AMP from adenine: step 1/1. Functionally, catalyzes a salvage reaction resulting in the formation of AMP, that is energically less costly than de novo synthesis. This Mycobacterium tuberculosis (strain ATCC 25618 / H37Rv) protein is Adenine phosphoribosyltransferase.